The following is a 306-amino-acid chain: Ornithine carbamoyltransferase, anabolic (306 aa).

Carbamoyl phosphate contacts are provided by residues 46-49, Gln73, Arg97, and 124-127; these read STRT and HPTQ. Residues Asn156, Asp220, and 224–225 contribute to the L-ornithine site; that span reads SM. Carbamoyl phosphate-binding positions include 260-261 and Arg288; that span reads CL.

This sequence belongs to the aspartate/ornithine carbamoyltransferase superfamily. OTCase family. Homohexamer; dimer of trimers.

The protein resides in the cytoplasm. It carries out the reaction carbamoyl phosphate + L-ornithine = L-citrulline + phosphate + H(+). Its pathway is amino-acid biosynthesis; L-arginine biosynthesis; L-arginine from L-ornithine and carbamoyl phosphate: step 1/3. In terms of biological role, reversibly catalyzes the transfer of the carbamoyl group from carbamoyl phosphate (CP) to the N(epsilon) atom of ornithine (ORN) to produce L-citrulline, which is a substrate for argininosuccinate synthetase (ArgG) involved in the final step in arginine biosynthesis. This is Ornithine carbamoyltransferase, anabolic from Campylobacter jejuni subsp. jejuni serotype O:2 (strain ATCC 700819 / NCTC 11168).